A 271-amino-acid polypeptide reads, in one-letter code: Catechol O-methyltransferase (271 aa).

Topologically, residues 1 to 6 are cytoplasmic; sequence MPEAPP. A helical; Signal-anchor for type II membrane protein membrane pass occupies residues 7–26; sequence LLLAAVLLGLVLLVVLLLLL. The Extracellular segment spans residues 27–271; that stretch reads RHWGWGLCLI…YKGPGSEAGP (245 aa). S-adenosyl-L-methionine is bound by residues Val92, Glu114, Ser122, Glu140, Ile141, 167-170, Ser169, and Asp191; that span reads GASQ. Asp191 contacts Mg(2+). Lys194 is a substrate binding site. Mg(2+) contacts are provided by Asp219 and Asn220. Residues Asn220 and Glu249 each coordinate substrate. The residue at position 267 (Ser267) is a Phosphoserine.

This sequence belongs to the class I-like SAM-binding methyltransferase superfamily. Cation-dependent O-methyltransferase family. It depends on Mg(2+) as a cofactor. The N-terminus is blocked. In terms of tissue distribution, brain, liver, placenta, lymphocytes and erythrocytes.

The protein resides in the cytoplasm. It localises to the cell membrane. The enzyme catalyses a catechol + S-adenosyl-L-methionine = a guaiacol + S-adenosyl-L-homocysteine + H(+). It catalyses the reaction 2-hydroxyestrone + S-adenosyl-L-methionine = 2-hydroxy-3-methoxy-estrone + S-adenosyl-L-homocysteine + H(+). It carries out the reaction 4-hydroxyestrone + S-adenosyl-L-methionine = 4-methoxyestrone + S-adenosyl-L-homocysteine + H(+). The catalysed reaction is 2-hydroxyestrone + S-adenosyl-L-methionine = 2-methoxyestrone + S-adenosyl-L-homocysteine + H(+). The enzyme catalyses 4-hydroxy-17beta-estradiol + S-adenosyl-L-methionine = 4-methoxy-17beta-estradiol + S-adenosyl-L-homocysteine + H(+). It catalyses the reaction 2-hydroxy-17beta-estradiol + S-adenosyl-L-methionine = 2-hydroxy-3-methoxy-17beta-estradiol + S-adenosyl-L-homocysteine + H(+). It carries out the reaction 2-hydroxy-17beta-estradiol + S-adenosyl-L-methionine = 2-methoxy-17beta-estradiol + S-adenosyl-L-homocysteine + H(+). Its function is as follows. Catalyzes the O-methylation, and thereby the inactivation, of catecholamine neurotransmitters and catechol hormones. Also shortens the biological half-lives of certain neuroactive drugs, like L-DOPA, alpha-methyl DOPA and isoproterenol. This Homo sapiens (Human) protein is Catechol O-methyltransferase.